A 744-amino-acid chain; its full sequence is Glucosamine inositolphosphorylceramide transferase 1 (744 aa).

Transmembrane regions (helical) follow at residues 31 to 51, 378 to 398, and 460 to 480; these read FLVAAAAGAALVGGVYFWLVV, SLFGYMGFLVAVALVTFVGFV, and LFFCVIALIGIVNVCIAVHFL. Residues N534, 558-563, 579-581, R609, and 665-669 contribute to the substrate site; these read NSLNNR, DDD, and FNCED. A Mn(2+)-binding site is contributed by D581. A disulfide bridge links C667 with C718. Residue D669 is part of the active site.

The protein belongs to the glycosyltransferase 64 family. The cofactor is Mn(2+). In terms of tissue distribution, highly expressed in almost all tissues.

Its subcellular location is the membrane. Its pathway is sphingolipid metabolism. Essential protein. Glycosyltransferase that mediates the glycosylation of glycosylinositol phosphorylceramides (GIPCs), the major sphingolipids in the plasma membrane; acts as a HexN(Ac)-specific GIPC sugar transferase. Responsible for the glycosylation of a subgroup of GIPCs found in seeds and pollen that contain GlcNAc and GlcN (GlcN(Ac)). Maybe involved in the maintenance of cell-cell adhesion. The protein is Glucosamine inositolphosphorylceramide transferase 1 of Oryza sativa subsp. japonica (Rice).